The chain runs to 154 residues: UPF0260 protein HI_1355 (154 aa).

This sequence belongs to the UPF0260 family.

This is UPF0260 protein HI_1355 from Haemophilus influenzae (strain ATCC 51907 / DSM 11121 / KW20 / Rd).